A 230-amino-acid chain; its full sequence is Cytochrome c-552 (230 aa).

Positions 1–47 (MTTYLSQDRLRNKENDTMTYQHSKMYQSRTFLLFSALLLVAGQASAA) are cleaved as a signal peptide. Positions 63, 66, 67, 166, 169, and 170 each coordinate heme c.

Binds 2 heme c groups covalently per subunit.

It localises to the periplasm. Functionally, diheme, high potential cytochrome c. The protein is Cytochrome c-552 (cyc1) of Acidithiobacillus ferridurans.